A 254-amino-acid chain; its full sequence is 3-deoxy-manno-octulosonate cytidylyltransferase (254 aa).

It belongs to the KdsB family.

The protein localises to the cytoplasm. The enzyme catalyses 3-deoxy-alpha-D-manno-oct-2-ulosonate + CTP = CMP-3-deoxy-beta-D-manno-octulosonate + diphosphate. The protein operates within nucleotide-sugar biosynthesis; CMP-3-deoxy-D-manno-octulosonate biosynthesis; CMP-3-deoxy-D-manno-octulosonate from 3-deoxy-D-manno-octulosonate and CTP: step 1/1. It functions in the pathway bacterial outer membrane biogenesis; lipopolysaccharide biosynthesis. Functionally, activates KDO (a required 8-carbon sugar) for incorporation into bacterial lipopolysaccharide in Gram-negative bacteria. In Chlamydia trachomatis serovar L2 (strain ATCC VR-902B / DSM 19102 / 434/Bu), this protein is 3-deoxy-manno-octulosonate cytidylyltransferase.